We begin with the raw amino-acid sequence, 186 residues long: CASP-like protein 4C2 (186 aa).

The Cytoplasmic portion of the chain corresponds to 1-31 (MRSPQPHRSGGDTQQHFQSTVSVQKLKRFNS). The chain crosses the membrane as a helical span at residues 32 to 52 (LILVFRFAAFCFSLASAVFML). Residues 53 to 71 (TNSRGSDSLHWYNFDAFRY) lie on the Extracellular side of the membrane. A helical transmembrane segment spans residues 72–92 (VFAANAIVAIYSLFEMAASVW). Residues 93–103 (EISRNATLFPE) lie on the Cytoplasmic side of the membrane. The chain crosses the membrane as a helical span at residues 104 to 124 (ICQVWFDFGHDQVFAYLLLSA). Topologically, residues 125–150 (NTAGTELARTLKDTCTDNKAFCVQSD) are extracellular. The chain crosses the membrane as a helical span at residues 151 to 171 (IAIVLGFAGFLFLGISSLFSG). Residues 172 to 186 (FRVVCFIINGSRFYV) lie on the Cytoplasmic side of the membrane.

Belongs to the Casparian strip membrane proteins (CASP) family. Homodimer and heterodimers.

It is found in the cell membrane. In Populus trichocarpa (Western balsam poplar), this protein is CASP-like protein 4C2.